We begin with the raw amino-acid sequence, 1037 residues long: Mediator of RNA polymerase II transcription subunit 14 (1037 aa).

It belongs to the Mediator complex subunit 14 family. As to quaternary structure, component of the Mediator complex.

Its subcellular location is the nucleus. Its function is as follows. Component of the Mediator complex, a coactivator involved in the regulated transcription of nearly all RNA polymerase II-dependent genes. Mediator functions as a bridge to convey information from gene-specific regulatory proteins to the basal RNA polymerase II transcription machinery. Mediator is recruited to promoters by direct interactions with regulatory proteins and serves as a scaffold for the assembly of a functional preinitiation complex with RNA polymerase II and the general transcription factors. The polypeptide is Mediator of RNA polymerase II transcription subunit 14 (RGR1) (Candida glabrata (strain ATCC 2001 / BCRC 20586 / JCM 3761 / NBRC 0622 / NRRL Y-65 / CBS 138) (Yeast)).